A 457-amino-acid chain; its full sequence is RuvB-like helicase 1 (457 aa).

73-80 (GGPSTGKT) serves as a coordination point for ATP.

This sequence belongs to the RuvB family. May form heterododecamers with RVB2. Component of the SWR1 chromatin remodeling complex, the INO80 chromatin remodeling complex, and of the R2TP complex.

The protein localises to the nucleus. The enzyme catalyses ATP + H2O = ADP + phosphate + H(+). In terms of biological role, DNA helicase which participates in several chromatin remodeling complexes, including the SWR1 and the INO80 complexes. The SWR1 complex mediates the ATP-dependent exchange of histone H2A for the H2A variant HZT1 leading to transcriptional regulation of selected genes by chromatin remodeling. The INO80 complex remodels chromatin by shifting nucleosomes and is involved in DNA repair. Also involved in pre-rRNA processing. This is RuvB-like helicase 1 (RVB1) from Kluyveromyces lactis (strain ATCC 8585 / CBS 2359 / DSM 70799 / NBRC 1267 / NRRL Y-1140 / WM37) (Yeast).